The primary structure comprises 707 residues: Coiled-coil domain-containing protein 177 (707 aa).

2 disordered regions span residues 1 to 65 (MVDP…EGGR) and 183 to 294 (PSAG…SALT). 3 stretches are compositionally biased toward low complexity: residues 38 to 49 (AASSASASASAA), 183 to 215 (PSAG…PSSA), and 243 to 258 (ALSS…YSGE). Serine 311 is modified (phosphoserine). The stretch at 364–605 (GQWELQRVHA…LQHATQVAEE (242 aa)) forms a coiled coil. 4 disordered regions span residues 372–426 (HAKQ…RSEE), 454–581 (KLQQ…EREH), 597–637 (QHAT…RDED), and 652–707 (ERSE…LDRK). Composition is skewed to basic and acidic residues over residues 377-392 (RERE…EQGR), 399-426 (VEER…RSEE), 454-484 (KLQQ…ERAQ), 491-514 (QRQE…RHEA), 543-581 (ENYE…EREH), 618-637 (RLEK…RDED), and 652-664 (ERSE…RRSA). Over residues 665 to 675 (LESARSTARAS) the composition is skewed to low complexity. Over residues 677 to 707 (HVREKVREETNTRSFDRMVREAQLHASLDRK) the composition is skewed to basic and acidic residues.

The sequence is that of Coiled-coil domain-containing protein 177 (CCDC177) from Homo sapiens (Human).